A 199-amino-acid polypeptide reads, in one-letter code: DnaJ homolog subfamily C member 5B (199 aa).

S14 and S16 each carry phosphoserine. Residues 19–84 (SLYEILGLHK…SKRNIYDKYG (66 aa)) form the J domain.

Interacts with the chaperone complex consisting of HSC70 and SGTA. In terms of processing, palmitoylated.

It localises to the membrane. This Mus musculus (Mouse) protein is DnaJ homolog subfamily C member 5B (Dnajc5b).